Consider the following 152-residue polypeptide: Large ribosomal subunit protein uL13 (152 aa).

The disordered stretch occupies residues 133-152; sequence EHPHQAQKPQPLTINTIPGA. Residues 139–152 show a composition bias toward polar residues; sequence QKPQPLTINTIPGA.

It belongs to the universal ribosomal protein uL13 family. In terms of assembly, part of the 50S ribosomal subunit.

This protein is one of the early assembly proteins of the 50S ribosomal subunit, although it is not seen to bind rRNA by itself. It is important during the early stages of 50S assembly. The polypeptide is Large ribosomal subunit protein uL13 (Thermosynechococcus vestitus (strain NIES-2133 / IAM M-273 / BP-1)).